A 101-amino-acid polypeptide reads, in one-letter code: NADH-quinone oxidoreductase subunit K (101 aa).

Helical transmembrane passes span 5 to 25, 30 to 50, and 62 to 82; these read PNWY…GVLF, IVVL…LVTF, and LVFF…AIVI.

Belongs to the complex I subunit 4L family. In terms of assembly, NDH-1 is composed of 14 different subunits. Subunits NuoA, H, J, K, L, M, N constitute the membrane sector of the complex.

The protein localises to the cell inner membrane. The enzyme catalyses a quinone + NADH + 5 H(+)(in) = a quinol + NAD(+) + 4 H(+)(out). NDH-1 shuttles electrons from NADH, via FMN and iron-sulfur (Fe-S) centers, to quinones in the respiratory chain. The immediate electron acceptor for the enzyme in this species is believed to be a menaquinone. Couples the redox reaction to proton translocation (for every two electrons transferred, four hydrogen ions are translocated across the cytoplasmic membrane), and thus conserves the redox energy in a proton gradient. The polypeptide is NADH-quinone oxidoreductase subunit K (Salinibacter ruber (strain DSM 13855 / M31)).